A 373-amino-acid polypeptide reads, in one-letter code: Valienol-1-phosphate guanylyltransferase (373 aa).

Substrate is bound by residues glycine 177 and 192–193 (EK).

It belongs to the bacterial/plant glucose-1-phosphate adenylyltransferase family. The cofactor is Mg(2+).

It catalyses the reaction valienol 1-phosphate + GTP + H(+) = GDP-valienol + diphosphate. In terms of biological role, involved in the biosynthesis of the antifungal agent validamycin A. Catalyzes the conversion of valienol 1-phosphate to GDP-valienol and less effectively to ADP-valienol or other NDP derivatives. The sequence is that of Valienol-1-phosphate guanylyltransferase from Streptomyces hygroscopicus subsp. limoneus.